A 94-amino-acid polypeptide reads, in one-letter code: DASH complex subunit DAD5 (94 aa).

Residues 1–20 (MRRSTIVPTSRTSSSSPSPS) are compositionally biased toward low complexity. Positions 1–25 (MRRSTIVPTSRTSSSSPSPSQMKSF) are disordered.

This sequence belongs to the DASH complex HSK3 family. Component of the DASH complex consisting of ask1, dad1, dad2, dad3, dad4, dam1, duo1, dad5, spc19 and spc34, with a stoichiometry of one copy of each subunit per complex. Multiple DASH complexes oligomerize to form a ring that encircles spindle microtubules and organizes the rod-like NDC80 complexes of the outer kinetochore. DASH complex oligomerization strengthens microtubule attachments. On cytoplasmic microtubules, DASH complexes appear to form patches instead of rings.

It localises to the nucleus. The protein resides in the cytoplasm. The protein localises to the cytoskeleton. Its subcellular location is the spindle. It is found in the chromosome. It localises to the centromere. The protein resides in the kinetochore. Component of the DASH complex that connects microtubules with kinetochores and couples microtubule depolymerisation to chromosome movement; it is involved in retrieving kinetochores to the spindle poles before their re-orientation on the spindle in early mitosis and allows microtubule depolymerization to pull chromosomes apart and resist detachment during anaphase. Kinetochores, consisting of a centromere-associated inner segment and a microtubule-contacting outer segment, play a crucial role in chromosome segregation by mediating the physical connection between centromeric DNA and microtubules. Kinetochores also serve as an input point for the spindle assembly checkpoint, which delays anaphase until all chromosomes have bioriented on the mitotic spindle. The DASH complex mediates bipolar kinetochore-microtubule attachments and facilitates the formation of additional interactions between outer kinetochore components and spindle microtubules. During chromosome movement along the microtubule, it is required both for the sliding of kinetochores along the lateral side of the microtubule and also for microtubule end-on pulling on the kinetochore. Modulates cytoplasmic microtubule dynamics by tracking the plus-end of shortening microtubules and slowing their depolymerization. In Schizosaccharomyces pombe (strain 972 / ATCC 24843) (Fission yeast), this protein is DASH complex subunit DAD5.